The sequence spans 524 residues: Acetyl-CoA hydrolase (524 aa).

279-283 serves as a coordination point for CoA; sequence GIGNI. E304 (5-glutamyl coenzyme A thioester intermediate) is an active-site residue. G398 contacts CoA.

This sequence belongs to the acetyl-CoA hydrolase/transferase family.

It localises to the cytoplasm. It carries out the reaction acetyl-CoA + H2O = acetate + CoA + H(+). In terms of biological role, presumably involved in regulating the intracellular acetyl-CoA pool for fatty acid and cholesterol synthesis and fatty acid oxidation. The protein is Acetyl-CoA hydrolase (ACH1) of Yarrowia lipolytica (strain CLIB 122 / E 150) (Yeast).